A 228-amino-acid chain; its full sequence is Ribonuclease 3 (228 aa).

The region spanning 5 to 127 is the RNase III domain; sequence LTALQERLKH…LIGAVYLDAG (123 aa). Glu40 is a Mg(2+) binding site. Asp44 is a catalytic residue. Asp113 and Glu116 together coordinate Mg(2+). Glu116 is an active-site residue. Positions 154-224 constitute a DRBM domain; that stretch reads DPKTELQEWL…AAAMLIRLKA (71 aa).

Belongs to the ribonuclease III family. In terms of assembly, homodimer. It depends on Mg(2+) as a cofactor.

The protein resides in the cytoplasm. The catalysed reaction is Endonucleolytic cleavage to 5'-phosphomonoester.. In terms of biological role, digests double-stranded RNA. Involved in the processing of primary rRNA transcript to yield the immediate precursors to the large and small rRNAs (23S and 16S). Processes some mRNAs, and tRNAs when they are encoded in the rRNA operon. Processes pre-crRNA and tracrRNA of type II CRISPR loci if present in the organism. The sequence is that of Ribonuclease 3 from Variovorax paradoxus (strain S110).